The following is a 483-amino-acid chain: Salicylaldehyde dehydrogenase (483 aa).

228–233 (GSTRVG) contributes to the NAD(+) binding site. Catalysis depends on residues Glu-250 and Cys-284.

Belongs to the aldehyde dehydrogenase family.

The catalysed reaction is salicylaldehyde + NAD(+) + H2O = salicylate + NADH + 2 H(+). It functions in the pathway aromatic compound metabolism; naphthalene degradation. This Pseudomonas putida (Arthrobacter siderocapsulatus) protein is Salicylaldehyde dehydrogenase (nahF).